A 97-amino-acid polypeptide reads, in one-letter code: YcgL domain-containing protein PA1295 (97 aa).

Residues 3–87 (RICSVYKSPR…GEEEYIEHLP (85 aa)) form the YcgL domain.

This is YcgL domain-containing protein PA1295 from Pseudomonas aeruginosa (strain ATCC 15692 / DSM 22644 / CIP 104116 / JCM 14847 / LMG 12228 / 1C / PRS 101 / PAO1).